Consider the following 374-residue polypeptide: Carboxypeptidase O (374 aa).

A signal peptide spans 1 to 20 (MKPLLETLYLLGMLVPGGLG). A Peptidase M14 domain is found at 49-344 (IYHPMGEIYE…EAVLSVLDDV (296 aa)). Zn(2+) is bound by residues His108 and Glu111. N-linked (GlcNAc...) asparagine glycosylation is found at Asn132, Asn174, and Asn187. His236 lines the Zn(2+) pocket. A glycan (N-linked (GlcNAc...) asparagine) is linked at Asn251. The active-site Proton donor/acceptor is the Glu310. Asp352 is lipidated: GPI-anchor amidated aspartate. Positions 353–374 (SAGRVTSATMLLGLLVSCMSLL) are cleaved as a propeptide — removed in mature form.

This sequence belongs to the peptidase M14 family. Requires Zn(2+) as cofactor. In terms of processing, N-glycosylated. Detected in enterocytes of the ileum.

It localises to the apical cell membrane. With respect to regulation, strongly inhibited by potato carboxypeptidase inhibitor, and the chelating agents EDTA and 1,10-phenanthroline. Also inhibited by compounds with multiple carboxylic acid groups such as citrate and succinate, and to a lesser exent the amino acids aspartate and glutamate. Not significantly inhibited by benzylsuccinic acid. In terms of biological role, carboxypeptidase which preferentially cleaves C-terminal acidic residues from peptides and proteins. Can also cleave C-terminal hydrophobic amino acids, with a preference for small residues over large residues. This chain is Carboxypeptidase O, found in Homo sapiens (Human).